A 775-amino-acid chain; its full sequence is MIARGTHREGRIPPFMTNNHSVFYDEEFGTHSVEATIDNGDFGSRTIRLETGQLARQANGSVVAYLDEDTMMLSTTTASSKPREGFDFFPLTVDVEERMYAAGRIPGSFFRREGRPGTDAILACRLIDRPLRPTFVKGLRNEVQVIVTVMSLDPKDMYDVVAINAASASTQLSGLPVSGPVGGVRMALIVDDDHEDGQWVAFPTREQHESALFEMVVAGRLTDEQVPEKPRKGRRRGRKSSPRKKTDNVAIMMVEAGATETVVERVNDGAPAPTESVVAEGIEAAKPFIAELCGAQQALRQAVDPETEEFPLFPPYGADVLAAVDSEAKGRISDIMSIADKQERDEALSSDMDDTVEALLEEFPEREAEIRAAHNAVTKEVVRSRILADGFRIDGRGVEDIRDLDVEVDLVPRAHGSSLFQRGETQILGVTTLDTLKMEQQVDSLGPVDHRRYIHHYNFPPYSTGETGRVGSPKRREIGHGALAERALKPMIPSRDDFPYTIRQVSEALGSNGSTSMGSVCASTLSLYNAGVPLKAPVAGIAMGLVSGEVKGKMTYVTLTDILGAEDAFGDMDFKVAGTEDFITALQLDTKLDGIPSDVLAGALKQAREARLEILNTMAEVIDEPDPMSDYAPRITTISVPVSKIGEVIGPKGKNINQITEDTGARVSIEDDGTVFISATSGGSAEAAVDRINEIANPQLPKVGERFLGTVVKTTAFGAFVSILPNRDGLVHISKLGGKKRIEKVEDVVNVGDKLEVEIADIDNRGKISLVPVDD.

The tract at residues 223-247 (DEQVPEKPRKGRRRGRKSSPRKKTD) is disordered. Positions 231–243 (RKGRRRGRKSSPR) are enriched in basic residues. Aspartate 567 and aspartate 573 together coordinate Mg(2+). Positions 633–692 (PRITTISVPVSKIGEVIGPKGKNINQITEDTGARVSIEDDGTVFISATSGGSAEAAVDRI) constitute a KH domain. Residues 704-773 (GERFLGTVVK…NRGKISLVPV (70 aa)) enclose the S1 motif domain.

This sequence belongs to the polyribonucleotide nucleotidyltransferase family. Requires Mg(2+) as cofactor.

The protein resides in the cytoplasm. The enzyme catalyses RNA(n+1) + phosphate = RNA(n) + a ribonucleoside 5'-diphosphate. Involved in mRNA degradation. Catalyzes the phosphorolysis of single-stranded polyribonucleotides processively in the 3'- to 5'-direction. In Corynebacterium kroppenstedtii (strain DSM 44385 / JCM 11950 / CIP 105744 / CCUG 35717), this protein is Polyribonucleotide nucleotidyltransferase.